We begin with the raw amino-acid sequence, 161 residues long: Nucleotide-binding protein LHK_01423 (161 aa).

Belongs to the YajQ family.

Nucleotide-binding protein. This Laribacter hongkongensis (strain HLHK9) protein is Nucleotide-binding protein LHK_01423.